The following is a 147-amino-acid chain: Large ribosomal subunit protein uL15 (147 aa).

Residues 1 to 42 (MTIKLHHLRPAPGAKTDKTRVGRGEGSKGKTAGRGTKGTKAR) are disordered. The span at 15 to 28 (KTDKTRVGRGEGSK) shows a compositional bias: basic and acidic residues.

This sequence belongs to the universal ribosomal protein uL15 family. In terms of assembly, part of the 50S ribosomal subunit.

Binds to the 23S rRNA. This is Large ribosomal subunit protein uL15 from Nocardia farcinica (strain IFM 10152).